Reading from the N-terminus, the 147-residue chain is Small ribosomal subunit protein uS12 (147 aa).

Belongs to the universal ribosomal protein uS12 family. As to quaternary structure, part of the 30S ribosomal subunit.

Its function is as follows. With S4 and S5 plays an important role in translational accuracy. Located at the interface of the 30S and 50S subunits. In Methanococcus maripaludis (strain C7 / ATCC BAA-1331), this protein is Small ribosomal subunit protein uS12.